The chain runs to 435 residues: Citrate synthase (435 aa).

Active-site residues include histidine 311 and aspartate 370.

Belongs to the citrate synthase family. In terms of assembly, homohexamer.

It carries out the reaction oxaloacetate + acetyl-CoA + H2O = citrate + CoA + H(+). The protein operates within carbohydrate metabolism; tricarboxylic acid cycle; isocitrate from oxaloacetate: step 1/2. The polypeptide is Citrate synthase (gltA) (Rickettsia africae (strain ESF-5)).